A 100-amino-acid chain; its full sequence is Small ribosomal subunit protein uS14c (100 aa).

The protein belongs to the universal ribosomal protein uS14 family. As to quaternary structure, part of the 30S ribosomal subunit.

It localises to the plastid. Functionally, binds 16S rRNA, required for the assembly of 30S particles. The sequence is that of Small ribosomal subunit protein uS14c from Euglena longa (Euglenophycean alga).